We begin with the raw amino-acid sequence, 153 residues long: UPF0178 protein CC_1215 (153 aa).

The protein belongs to the UPF0178 family.

In Caulobacter vibrioides (strain ATCC 19089 / CIP 103742 / CB 15) (Caulobacter crescentus), this protein is UPF0178 protein CC_1215.